Consider the following 154-residue polypeptide: 6,7-dimethyl-8-ribityllumazine synthase (154 aa).

5-amino-6-(D-ribitylamino)uracil contacts are provided by residues Phe-26, Ala-60–Glu-62, and Cys-84–Ile-86. Glu-89–Thr-90 provides a ligand contact to (2S)-2-hydroxy-3-oxobutyl phosphate. His-92 acts as the Proton donor in catalysis. Asn-117 is a binding site for 5-amino-6-(D-ribitylamino)uracil. Arg-131 is a (2S)-2-hydroxy-3-oxobutyl phosphate binding site.

It belongs to the DMRL synthase family.

The enzyme catalyses (2S)-2-hydroxy-3-oxobutyl phosphate + 5-amino-6-(D-ribitylamino)uracil = 6,7-dimethyl-8-(1-D-ribityl)lumazine + phosphate + 2 H2O + H(+). The protein operates within cofactor biosynthesis; riboflavin biosynthesis; riboflavin from 2-hydroxy-3-oxobutyl phosphate and 5-amino-6-(D-ribitylamino)uracil: step 1/2. Functionally, catalyzes the formation of 6,7-dimethyl-8-ribityllumazine by condensation of 5-amino-6-(D-ribitylamino)uracil with 3,4-dihydroxy-2-butanone 4-phosphate. This is the penultimate step in the biosynthesis of riboflavin. The polypeptide is 6,7-dimethyl-8-ribityllumazine synthase (Acidovorax sp. (strain JS42)).